A 394-amino-acid polypeptide reads, in one-letter code: Phosphopentomutase (394 aa).

Mn(2+)-binding residues include Asp13, Asp286, His291, Asp327, His328, and His339.

Belongs to the phosphopentomutase family. It depends on Mn(2+) as a cofactor.

It localises to the cytoplasm. The catalysed reaction is 2-deoxy-alpha-D-ribose 1-phosphate = 2-deoxy-D-ribose 5-phosphate. The enzyme catalyses alpha-D-ribose 1-phosphate = D-ribose 5-phosphate. The protein operates within carbohydrate degradation; 2-deoxy-D-ribose 1-phosphate degradation; D-glyceraldehyde 3-phosphate and acetaldehyde from 2-deoxy-alpha-D-ribose 1-phosphate: step 1/2. Functionally, isomerase that catalyzes the conversion of deoxy-ribose 1-phosphate (dRib-1-P) and ribose 1-phosphate (Rib-1-P) to deoxy-ribose 5-phosphate (dRib-5-P) and ribose 5-phosphate (Rib-5-P), respectively. This is Phosphopentomutase from Bacillus cereus (strain ATCC 10987 / NRS 248).